Reading from the N-terminus, the 523-residue chain is uncharacterized protein (523 aa).

This is an uncharacterized protein from Saccharomyces cerevisiae (strain ATCC 204508 / S288c) (Baker's yeast).